We begin with the raw amino-acid sequence, 387 residues long: 3-ketoacyl-CoA thiolase (387 aa).

The active-site Acyl-thioester intermediate is cysteine 91. Active-site proton acceptor residues include histidine 343 and cysteine 373.

Belongs to the thiolase-like superfamily. Thiolase family. Heterotetramer of two alpha chains (FadB) and two beta chains (FadA).

The protein localises to the cytoplasm. It catalyses the reaction an acyl-CoA + acetyl-CoA = a 3-oxoacyl-CoA + CoA. Its pathway is lipid metabolism; fatty acid beta-oxidation. Its function is as follows. Catalyzes the final step of fatty acid oxidation in which acetyl-CoA is released and the CoA ester of a fatty acid two carbons shorter is formed. The sequence is that of 3-ketoacyl-CoA thiolase from Cronobacter sakazakii (strain ATCC BAA-894) (Enterobacter sakazakii).